Here is a 199-residue protein sequence, read N- to C-terminus: Probable nicotinate-nucleotide adenylyltransferase (199 aa).

The protein belongs to the NadD family.

The enzyme catalyses nicotinate beta-D-ribonucleotide + ATP + H(+) = deamido-NAD(+) + diphosphate. The protein operates within cofactor biosynthesis; NAD(+) biosynthesis; deamido-NAD(+) from nicotinate D-ribonucleotide: step 1/1. Catalyzes the reversible adenylation of nicotinate mononucleotide (NaMN) to nicotinic acid adenine dinucleotide (NaAD). The sequence is that of Probable nicotinate-nucleotide adenylyltransferase from Rhizobium johnstonii (strain DSM 114642 / LMG 32736 / 3841) (Rhizobium leguminosarum bv. viciae).